A 92-amino-acid polypeptide reads, in one-letter code: Large ribosomal subunit protein eL31 (92 aa).

This sequence belongs to the eukaryotic ribosomal protein eL31 family.

The chain is Large ribosomal subunit protein eL31 from Halorubrum lacusprofundi (strain ATCC 49239 / DSM 5036 / JCM 8891 / ACAM 34).